Reading from the N-terminus, the 156-residue chain is ATP synthase subunit b 1 (156 aa).

A helical transmembrane segment spans residues L7–P27.

Belongs to the ATPase B chain family. In terms of assembly, F-type ATPases have 2 components, F(1) - the catalytic core - and F(0) - the membrane proton channel. F(1) has five subunits: alpha(3), beta(3), gamma(1), delta(1), epsilon(1). F(0) has three main subunits: a(1), b(2) and c(10-14). The alpha and beta chains form an alternating ring which encloses part of the gamma chain. F(1) is attached to F(0) by a central stalk formed by the gamma and epsilon chains, while a peripheral stalk is formed by the delta and b chains.

The protein localises to the cell inner membrane. In terms of biological role, f(1)F(0) ATP synthase produces ATP from ADP in the presence of a proton or sodium gradient. F-type ATPases consist of two structural domains, F(1) containing the extramembraneous catalytic core and F(0) containing the membrane proton channel, linked together by a central stalk and a peripheral stalk. During catalysis, ATP synthesis in the catalytic domain of F(1) is coupled via a rotary mechanism of the central stalk subunits to proton translocation. Functionally, component of the F(0) channel, it forms part of the peripheral stalk, linking F(1) to F(0). In Albidiferax ferrireducens (strain ATCC BAA-621 / DSM 15236 / T118) (Rhodoferax ferrireducens), this protein is ATP synthase subunit b 1.